The sequence spans 420 residues: Tyrosine--tRNA ligase (420 aa).

Tyrosine 38 is a binding site for L-tyrosine. Residues 43 to 52 (PTGDSLHIGH) carry the 'HIGH' region motif. Tyrosine 169 and glutamine 173 together coordinate L-tyrosine. The 'KMSKS' region motif lies at 231-235 (KFGKS). Residue lysine 234 coordinates ATP. Residues 353-419 (KNLVDFLVDT…GKRKYTLVTI (67 aa)) form the S4 RNA-binding domain.

Belongs to the class-I aminoacyl-tRNA synthetase family. TyrS type 1 subfamily. In terms of assembly, homodimer.

Its subcellular location is the cytoplasm. The enzyme catalyses tRNA(Tyr) + L-tyrosine + ATP = L-tyrosyl-tRNA(Tyr) + AMP + diphosphate + H(+). Its function is as follows. Catalyzes the attachment of tyrosine to tRNA(Tyr) in a two-step reaction: tyrosine is first activated by ATP to form Tyr-AMP and then transferred to the acceptor end of tRNA(Tyr). In Lactobacillus helveticus (strain DPC 4571), this protein is Tyrosine--tRNA ligase.